The sequence spans 458 residues: ATP synthase subunit beta (458 aa).

148–155 (GGAGVGKT) lines the ATP pocket.

The protein belongs to the ATPase alpha/beta chains family. As to quaternary structure, F-type ATPases have 2 components, CF(1) - the catalytic core - and CF(0) - the membrane proton channel. CF(1) has five subunits: alpha(3), beta(3), gamma(1), delta(1), epsilon(1). CF(0) has three main subunits: a(1), b(2) and c(9-12). The alpha and beta chains form an alternating ring which encloses part of the gamma chain. CF(1) is attached to CF(0) by a central stalk formed by the gamma and epsilon chains, while a peripheral stalk is formed by the delta and b chains.

The protein localises to the cell inner membrane. It catalyses the reaction ATP + H2O + 4 H(+)(in) = ADP + phosphate + 5 H(+)(out). Its function is as follows. Produces ATP from ADP in the presence of a proton gradient across the membrane. The catalytic sites are hosted primarily by the beta subunits. This chain is ATP synthase subunit beta, found in Legionella pneumophila (strain Paris).